A 191-amino-acid chain; its full sequence is Inosine triphosphate pyrophosphatase (191 aa).

Residue 12–17 (TGNKNK) participates in ITP binding. Glutamate 40 is a binding site for Mg(2+). ITP is bound by residues lysine 52, 68–69 (DS), lysine 85, 144–147 (FGWE), lysine 167, and 172–173 (HR).

Belongs to the HAM1 NTPase family. As to quaternary structure, homodimer. The cofactor is Mg(2+). Mn(2+) is required as a cofactor.

The protein localises to the cytoplasm. It localises to the nucleus. It catalyses the reaction ITP + H2O = IMP + diphosphate + H(+). The catalysed reaction is dITP + H2O = dIMP + diphosphate + H(+). The enzyme catalyses XTP + H2O = XMP + diphosphate + H(+). Pyrophosphatase that hydrolyzes non-canonical purine nucleotides such as inosine triphosphate (ITP), deoxyinosine triphosphate (dITP) or xanthosine 5'-triphosphate (XTP) to their respective monophosphate derivatives. The enzyme does not distinguish between the deoxy- and ribose forms. Probably excludes non-canonical purines from RNA and DNA precursor pools, thus preventing their incorporation into RNA and DNA and avoiding chromosomal lesions. The sequence is that of Inosine triphosphate pyrophosphatase from Aspergillus oryzae (strain ATCC 42149 / RIB 40) (Yellow koji mold).